The following is a 259-amino-acid chain: Enkurin (259 aa).

Disordered stretches follow at residues 1–26 (MVAM…EPPQ) and 76–98 (PPKK…TDHP). Residues 76 to 88 (PPKKKFEWNERRK) are compositionally biased toward basic and acidic residues. The short motif at 86–92 (RRKPPVP) is the SH3-binding element. In terms of domain architecture, Enkurin spans 163-255 (KRNEEVKKAQ…VLEKHKVIYI (93 aa)). The tract at residues 163-258 (KRNEEVKKAQ…KHKVIYIANK (96 aa)) is interaction with TRPC proteins. The 12-residue stretch at 179 to 190 (IQENLRKAAMKR) folds into the IQ domain.

As to quaternary structure, microtubule inner protein component of sperm flagellar doublet microtubules. Binds calmodulin via its IQ domain. Interacts with TRPC1, TRPC2, TRPC5, but not TRPC3. Interacts with CFAP45. Expressed in trachea multiciliated cells.

It localises to the cytoplasm. It is found in the cytoskeleton. The protein resides in the flagellum axoneme. The protein localises to the cilium axoneme. Functionally, adapter that functions to localize a calcium-sensitive signal transduction machinery in sperm to a calcium-permeable ion channel. Microtubule inner protein (MIP) part of the dynein-decorated doublet microtubules (DMTs) in cilia axoneme, which is required for motile cilia beating. This is Enkurin (ENKUR) from Bos taurus (Bovine).